Consider the following 358-residue polypeptide: uncharacterized protein (358 aa).

This is an uncharacterized protein from Klebsiella pneumoniae.